A 102-amino-acid polypeptide reads, in one-letter code: Small ribosomal subunit protein eS24 (102 aa).

Belongs to the eukaryotic ribosomal protein eS24 family.

The protein is Small ribosomal subunit protein eS24 of Methanococcus maripaludis (strain C5 / ATCC BAA-1333).